The chain runs to 396 residues: Ribosomal RNA large subunit methyltransferase I (396 aa).

The PUA domain maps to 2–81 (SVRLVLAKGR…ESIDIAFFTR (80 aa)).

Belongs to the methyltransferase superfamily. RlmI family.

Its subcellular location is the cytoplasm. It catalyses the reaction cytidine(1962) in 23S rRNA + S-adenosyl-L-methionine = 5-methylcytidine(1962) in 23S rRNA + S-adenosyl-L-homocysteine + H(+). In terms of biological role, specifically methylates the cytosine at position 1962 (m5C1962) of 23S rRNA. The chain is Ribosomal RNA large subunit methyltransferase I from Escherichia coli (strain SMS-3-5 / SECEC).